A 2353-amino-acid chain; its full sequence is Otogelin-like protein (2353 aa).

The first 31 residues, 1-31 (MNIVRKLNLMIPWSIFLLHVLLFSLQEYICA), serve as a signal peptide directing secretion. One can recognise a VWFD 1 domain in the interval 121–297 (GICKTWGQYH…VQTPDDTKCV (177 aa)). 2 disulfide bridges follow: Cys123-Cys257 and Cys145-Cys296. An N-linked (GlcNAc...) asparagine glycan is attached at Asn144. The TIL 1 domain occupies 390–443 (CDDSFVHRDCISCCPPTCTFEKQCLGSNLHCLDGCYCPDGLVMDNGTCISLENC). N-linked (GlcNAc...) asparagine glycosylation is found at Asn434 and Asn473. The 174-residue stretch at 481–654 (VQCSVVGDSH…NAWRVSSTCF (174 aa)) folds into the VWFD 2 domain. 3 cysteine pairs are disulfide-bonded: Cys483–Cys618, Cys505–Cys653, and Cys527–Cys535. Positions 745–800 (CQKGMLYHHCSSFCLHSCISLSSPEQCSDDCAEGCNCPEGKFYEDTLNFCVPIFHC) constitute a TIL 2 domain. 2 N-linked (GlcNAc...) asparagine glycosylation sites follow: Asn826 and Asn876. The 170-residue stretch at 946 to 1115 (AVCTIYGDRH…SWALGQCESP (170 aa)) folds into the VWFD 3 domain. Disulfide bonds link Cys948–Cys1078 and Cys992–Cys999. Residues Asn1289, Asn1604, and Asn2198 are each glycosylated (N-linked (GlcNAc...) asparagine). One can recognise a VWFD 4 domain in the interval 1534-1723 (CRCSMLSELS…SWEIEKSFEV (190 aa)). Cysteines 1536 and 1683 form a disulfide. Disulfide bonds link Cys2261/Cys2317, Cys2282/Cys2331, Cys2293/Cys2348, and Cys2297/Cys2350. The CTCK domain occupies 2261–2353 (CKREERICQK…EPIDCTCQWN (93 aa)).

Belongs to the otogelin family. As to expression, expressed at high levels in fetal inner ear and heart. Low levels in fetal skeletal muscle, kidney, spleen and colon. Not detected in fetal liver, lung, brain, nor in fetal stomach. In adult tissues, highest levels in brain, kidney, heart and retina. Relatively low levels in lung, spleen and duodenum. Not detected in adult skeletal muscle, liver, nor testis.

Its subcellular location is the secreted. This Homo sapiens (Human) protein is Otogelin-like protein (OTOGL).